The sequence spans 388 residues: uncharacterized protein (388 aa).

Transmembrane regions (helical) follow at residues 18-38, 42-62, 89-111, 116-136, 145-165, 171-191, 219-239, 248-268, 287-307, 341-361, and 365-385; these read AAMF…PLYV, LHLS…ATLL, ASGL…WAIL, VLLG…GMWL, VISW…PLGL, AGLA…SGVI, TGLV…ALWF, GFAM…CAKF, TGLA…GAAI, AFQD…TPFI, and QVFL…HLLL.

This sequence belongs to the major facilitator superfamily. YfcJ family.

The protein localises to the cell inner membrane. This is an uncharacterized protein from Salmonella typhimurium (strain LT2 / SGSC1412 / ATCC 700720).